We begin with the raw amino-acid sequence, 294 residues long: Phosphatidylserine decarboxylase proenzyme (294 aa).

Catalysis depends on charge relay system; for autoendoproteolytic cleavage activity residues D100, H157, and S261. S261 functions as the Schiff-base intermediate with substrate; via pyruvic acid; for decarboxylase activity in the catalytic mechanism. S261 carries the pyruvic acid (Ser); by autocatalysis modification.

The protein belongs to the phosphatidylserine decarboxylase family. PSD-B subfamily. Prokaryotic type I sub-subfamily. Heterodimer of a large membrane-associated beta subunit and a small pyruvoyl-containing alpha subunit. Pyruvate is required as a cofactor. In terms of processing, is synthesized initially as an inactive proenzyme. Formation of the active enzyme involves a self-maturation process in which the active site pyruvoyl group is generated from an internal serine residue via an autocatalytic post-translational modification. Two non-identical subunits are generated from the proenzyme in this reaction, and the pyruvate is formed at the N-terminus of the alpha chain, which is derived from the carboxyl end of the proenzyme. The autoendoproteolytic cleavage occurs by a canonical serine protease mechanism, in which the side chain hydroxyl group of the serine supplies its oxygen atom to form the C-terminus of the beta chain, while the remainder of the serine residue undergoes an oxidative deamination to produce ammonia and the pyruvoyl prosthetic group on the alpha chain. During this reaction, the Ser that is part of the protease active site of the proenzyme becomes the pyruvoyl prosthetic group, which constitutes an essential element of the active site of the mature decarboxylase.

The protein localises to the cell membrane. It carries out the reaction a 1,2-diacyl-sn-glycero-3-phospho-L-serine + H(+) = a 1,2-diacyl-sn-glycero-3-phosphoethanolamine + CO2. It functions in the pathway phospholipid metabolism; phosphatidylethanolamine biosynthesis; phosphatidylethanolamine from CDP-diacylglycerol: step 2/2. In terms of biological role, catalyzes the formation of phosphatidylethanolamine (PtdEtn) from phosphatidylserine (PtdSer). In Mannheimia succiniciproducens (strain KCTC 0769BP / MBEL55E), this protein is Phosphatidylserine decarboxylase proenzyme.